The following is a 293-amino-acid chain: Fructose-bisphosphate aldolase (293 aa).

S50 is a binding site for D-glyceraldehyde 3-phosphate. The active-site Proton donor is D85. The Zn(2+) site is built by H86, D106, E136, and H178. A dihydroxyacetone phosphate-binding site is contributed by G179. Residue H208 participates in Zn(2+) binding. Dihydroxyacetone phosphate contacts are provided by residues 209 to 211 and 230 to 233; these read GGS and NVNT.

The protein belongs to the class II fructose-bisphosphate aldolase family. Zn(2+) is required as a cofactor.

It catalyses the reaction beta-D-fructose 1,6-bisphosphate = D-glyceraldehyde 3-phosphate + dihydroxyacetone phosphate. The protein operates within carbohydrate degradation; glycolysis; D-glyceraldehyde 3-phosphate and glycerone phosphate from D-glucose: step 4/4. Its function is as follows. Catalyzes the aldol condensation of dihydroxyacetone phosphate (DHAP or glycerone-phosphate) with glyceraldehyde 3-phosphate (G3P) to form fructose 1,6-bisphosphate (FBP) in gluconeogenesis and the reverse reaction in glycolysis. In Streptococcus pyogenes serotype M6 (strain ATCC BAA-946 / MGAS10394), this protein is Fructose-bisphosphate aldolase (fba).